A 525-amino-acid polypeptide reads, in one-letter code: Glutamyl-tRNA(Gln) amidotransferase subunit A, mitochondrial (525 aa).

Residues Lys76 and Ser168 each act as charge relay system in the active site. Ser192 (acyl-ester intermediate) is an active-site residue.

This sequence belongs to the amidase family. GatA subfamily. As to quaternary structure, subunit of the heterotrimeric GatCAB amidotransferase (AdT) complex, composed of A (QRSL1), B (GATB) and C (GATC) subunits.

The protein resides in the mitochondrion. It carries out the reaction L-glutamyl-tRNA(Gln) + L-glutamine + ATP + H2O = L-glutaminyl-tRNA(Gln) + L-glutamate + ADP + phosphate + H(+). In terms of biological role, allows the formation of correctly charged Gln-tRNA(Gln) through the transamidation of misacylated Glu-tRNA(Gln) in the mitochondria. The reaction takes place in the presence of glutamine and ATP through an activated gamma-phospho-Glu-tRNA(Gln). The protein is Glutamyl-tRNA(Gln) amidotransferase subunit A, mitochondrial (Qrsl1) of Mus musculus (Mouse).